Here is a 386-residue protein sequence, read N- to C-terminus: Caspase-1-A (386 aa).

A propeptide spanning residues 1–100 (MTAQLNKVRR…PPMAPVPIQE (100 aa)) is cleaved from the precursor. Positions 22 to 88 (SDLLDDLREK…HKTLAKSLGL (67 aa)) constitute a CARD domain. Active-site residues include histidine 218 and cysteine 274. Residues 287–296 (DVASPPLEDD) constitute a propeptide that is removed on maturation.

Belongs to the peptidase C14A family. In terms of assembly, heterotetramer that consists of two anti-parallel arranged heterodimers, each one formed by a 20 kDa (Caspase-1 subunit p20) and a 10 kDa (Caspase-1 subunit p10) subunit. As to quaternary structure, heterotetramer that consists of two anti-parallel arranged heterodimers, each one formed by a 20 kDa (Caspase-1 subunit p20) and a 10 kDa (Caspase-1 subunit p10) subunit. Can form a heterodimer with isoform epsilon which then has an inhibitory effect. Post-translationally, the two subunits are derived from the precursor sequence by an autocatalytic mechanism.

The protein resides in the cytoplasm. Its subcellular location is the cell membrane. It carries out the reaction Strict requirement for an Asp residue at position P1 and has a preferred cleavage sequence of Tyr-Val-Ala-Asp-|-.. Functionally, thiol protease involved in a variety of inflammatory processes by proteolytically cleaving other proteins, such as the precursors of the inflammatory cytokines interleukin-1 beta (IL1B) and interleukin 18 (IL18) as well as the pyroptosis inducer Gasdermin-D (GSDMD), into active mature peptides. Plays a key role in cell immunity as an inflammatory response initiator: once activated through formation of an inflammasome complex, it initiates a pro-inflammatory response through the cleavage of the two inflammatory cytokines IL1B and IL18, releasing the mature cytokines which are involved in a variety of inflammatory processes. Cleaves a tetrapeptide after an Asp residue at position P1. Also initiates pyroptosis, a programmed lytic cell death pathway, through cleavage of GSDMD. This Xenopus laevis (African clawed frog) protein is Caspase-1-A (casp1-a).